The chain runs to 107 residues: U1-lycotoxin-Ls1p (107 aa).

An N-terminal signal peptide occupies residues methionine 1–serine 20. A propeptide spanning residues glutamate 21–arginine 41 is cleaved from the precursor. 4 disulfides stabilise this stretch: cysteine 44–cysteine 59, cysteine 51–cysteine 68, cysteine 58–cysteine 86, and cysteine 70–cysteine 84.

Belongs to the neurotoxin 19 (CSTX) family. 04 (U1-Lctx) subfamily. As to expression, expressed by the venom gland.

It is found in the secreted. The polypeptide is U1-lycotoxin-Ls1p (Lycosa singoriensis (Wolf spider)).